Reading from the N-terminus, the 385-residue chain is Chaperone protein DnaJ (385 aa).

In terms of domain architecture, J spans 5–72 (DYYEVLGVGK…QKRAAYDQFG (68 aa)). The segment at 26 to 48 (RKLAMKHHPDRNQGDGAKASEEK) is disordered. The span at 35–48 (DRNQGDGAKASEEK) shows a compositional bias: basic and acidic residues. The CR-type zinc-finger motif lies at 145-223 (GKESQIRIPT…CNGAGKVKKQ (79 aa)). The Zn(2+) site is built by Cys158, Cys161, Cys175, Cys178, Cys197, Cys200, Cys211, and Cys214. 4 CXXCXGXG motif repeats span residues 158–165 (CDTCHGSG), 175–182 (CTTCHGAG), 197–204 (CPHCHGSG), and 211–218 (CTSCNGAG). The disordered stretch occupies residues 362–385 (FRKGGDKHSPTSKSWTDRVKDLFK).

It belongs to the DnaJ family. In terms of assembly, homodimer. Zn(2+) serves as cofactor.

The protein localises to the cytoplasm. In terms of biological role, participates actively in the response to hyperosmotic and heat shock by preventing the aggregation of stress-denatured proteins and by disaggregating proteins, also in an autonomous, DnaK-independent fashion. Unfolded proteins bind initially to DnaJ; upon interaction with the DnaJ-bound protein, DnaK hydrolyzes its bound ATP, resulting in the formation of a stable complex. GrpE releases ADP from DnaK; ATP binding to DnaK triggers the release of the substrate protein, thus completing the reaction cycle. Several rounds of ATP-dependent interactions between DnaJ, DnaK and GrpE are required for fully efficient folding. Also involved, together with DnaK and GrpE, in the DNA replication of plasmids through activation of initiation proteins. The chain is Chaperone protein DnaJ from Leptothrix cholodnii (strain ATCC 51168 / LMG 8142 / SP-6) (Leptothrix discophora (strain SP-6)).